The sequence spans 413 residues: Serine/threonine transporter SstT (413 aa).

A run of 9 helical transmembrane segments spans residues 11-31, 43-63, 82-102, 141-161, 192-212, 216-236, 298-318, 339-359, and 363-383; these read IANG…VILA, FLGS…VFVL, IIGL…LFSF, ALLT…GITM, IGIF…ALAG, LLMV…PIIV, MGGA…TLGI, ASGV…LFGI, and VAMQ…SAET.

This sequence belongs to the dicarboxylate/amino acid:cation symporter (DAACS) (TC 2.A.23) family.

It localises to the cell inner membrane. It carries out the reaction L-serine(in) + Na(+)(in) = L-serine(out) + Na(+)(out). It catalyses the reaction L-threonine(in) + Na(+)(in) = L-threonine(out) + Na(+)(out). In terms of biological role, involved in the import of serine and threonine into the cell, with the concomitant import of sodium (symport system). The polypeptide is Serine/threonine transporter SstT (Shewanella frigidimarina (strain NCIMB 400)).